A 544-amino-acid polypeptide reads, in one-letter code: 4-coumarate--CoA ligase 1 (544 aa).

Residues Ser-190, Ser-191, Gly-192, Thr-193, Thr-194, and Lys-198 each contribute to the ATP site. Tyr-240 is a (E)-4-coumaroyl-AMP binding site. Lys-261 is a CoA binding site. Residues 263–332 (DIVPFLELIQ…AKFPNAKLGQ (70 aa)) form an SBD1 region. Residues Ala-310, Gln-332, Gly-333, Thr-337, and Met-345 each contribute to the (E)-4-coumaroyl-AMP site. Positions 332, 333, and 337 each coordinate ATP. Positions 333–400 (GYGMTEAGPV…IRGDQIMKGY (68 aa)) are SBD2. Residues Asp-421 and Arg-436 each coordinate ATP. 2 residues coordinate (E)-4-coumaroyl-AMP: Lys-438 and Lys-442. Residues Lys-444 and Gly-445 each contribute to the CoA site. Lys-527 lines the ATP pocket.

Belongs to the ATP-dependent AMP-binding enzyme family. Mg(2+) serves as cofactor.

It carries out the reaction (E)-4-coumarate + ATP + CoA = (E)-4-coumaroyl-CoA + AMP + diphosphate. The enzyme catalyses (E)-4-coumarate + ATP + H(+) = (E)-4-coumaroyl-AMP + diphosphate. The catalysed reaction is (E)-4-coumaroyl-AMP + CoA = (E)-4-coumaroyl-CoA + AMP + H(+). The protein operates within phytoalexin biosynthesis; 3,4',5-trihydroxystilbene biosynthesis; 3,4',5-trihydroxystilbene from trans-4-coumarate: step 1/2. Its function is as follows. Carboxylate--CoA ligase that may use 4-coumarate as substrate. Follows a two-step reaction mechanism, wherein the carboxylate substrate first undergoes adenylation by ATP, followed by a thioesterification in the presence of CoA to yield the final CoA thioester. The sequence is that of 4-coumarate--CoA ligase 1 (4CL1) from Petroselinum crispum (Parsley).